The sequence spans 204 residues: Large ribosomal subunit protein eL15 (204 aa).

It belongs to the eukaryotic ribosomal protein eL15 family. Component of the large ribosomal subunit.

The protein localises to the cytoplasm. Functionally, component of the large ribosomal subunit. The ribosome is a large ribonucleoprotein complex responsible for the synthesis of proteins in the cell. The sequence is that of Large ribosomal subunit protein eL15 (rpl15) from Siniperca knerii (Big-eye mandarin fish).